An 84-amino-acid chain; its full sequence is Figainin 2 (84 aa).

Residues 1 to 22 (MAFLKKSLFLVLFLGIVSLSVC) form the signal peptide. Residues 23–39 (EEEKREGEEKEEKREEE) are compositionally biased toward basic and acidic residues. The segment at 23-53 (EEEKREGEEKEEKREEEEGKEENEDGNEEHK) is disordered. A propeptide spanning residues 23 to 54 (EEEKREGEEKEEKREEEEGKEENEDGNEEHKE) is cleaved from the precursor. A compositionally biased stretch (acidic residues) spans 40-49 (EGKEENEDGN).

Expressed by the skin glands.

It localises to the secreted. Antimicrobial peptide that displays antibacterial, antiprotozoal, and antiviral activity. Exhibits antibacterial activity against the Gram-positive bacteria S.epidermidis ATCC 12228 (MIC=4 uM), E.casseliflavus ATCC 700327 (MIC=4 uM), S.aureus ATCC 25923 (MIC=8 uM) and E.faecalis ATCC 29212 (MIC=8 uM), and the Gram-negative bacteria E.coli ATCC 25922 (MIC=8 uM), K.pneumoniae ATCC 13883 (MIC=8 uM), the multi-resistant clinical isolate strain K.pneumoniae carbapanemase (KPC) MR (MIC=16 uM), and P.aeruginosa ATCC 27853 (MIC=32 uM). Displays antiprotozoal activity against the epimastigote form of T.cruzi (IC(50)=6.32 uM). Does not show antimicrobial against the fungi C.albicans ATCC 90028 and C.parapsilosis ATCC 22019. Displays antiviral activity against the human viruses chikungunya (EC(50)=17.9 uM), Dengue serotype 4 (EC(50)=20.8 uM) and Yellow Fever (EC(50)=21.8 uM). Shows moderate cytolytic activity against human erythrocytes (HC(50)=48.9 uM), and activates the oxidative burst in human neutrophils. Also displays anti-proliferative effects against MCF-7 breast cancer cells (IC(50)=15.3 uM) and B16F10 murine melanoma cells (IC(50)=12.8 uM). This is Figainin 2 from Boana raniceps (Chaco tree frog).